We begin with the raw amino-acid sequence, 358 residues long: MKLTLKNLSMAIMMSTIVMGSSAMAADSNEKIVIAHRGASGYLPEHTLPAKAMAYAQGADYLEQDLVMTKDDNLVVLHDHYLDRVTDVADRFPDRARKDGRYYAIDFTLDEIKSLKFTEGFDIENGKKVQTYPGRFPMGKSDFRVHTFEEEIEFVQGLNHSTGKNIGIYPEIKAPWFHHQEGKDIAAKTLEVLKKYGYTGKDDKVYLQCFDADELKRIKNELEPKMGMELNLVQLIAYTDWNETQQKQPDGSWVNYNYDWMFKPGAMKQVAEYADGIGPDYHMLIEETSQPGNIKLTGMVQDAQQNKLVVHPYTVRSDKLPEYTPDVNQLYDALYNKAGVNGLFTDFPDKAVKFLNKE.

The N-terminal stretch at 1-25 (MKLTLKNLSMAIMMSTIVMGSSAMA) is a signal peptide. The GP-PDE domain maps to 31–355 (KIVIAHRGAS…DFPDKAVKFL (325 aa)). The active-site Proton acceptor is His-36. The Ca(2+) site is built by Glu-63 and Asp-65. His-78 acts as the Proton donor in catalysis. Residue Glu-171 coordinates Ca(2+).

Belongs to the glycerophosphoryl diester phosphodiesterase family. As to quaternary structure, homodimer. Requires Ca(2+) as cofactor.

The protein resides in the periplasm. It carries out the reaction a sn-glycero-3-phosphodiester + H2O = an alcohol + sn-glycerol 3-phosphate + H(+). In terms of biological role, glycerophosphodiester phosphodiesterase hydrolyzes glycerophosphodiesters into glycerol-3-phosphate (G3P) and the corresponding alcohol. This is Glycerophosphodiester phosphodiesterase, periplasmic (glpQ) from Escherichia coli (strain K12).